The chain runs to 353 residues: Rhodopsin (353 aa).

The Extracellular segment spans residues 1 to 36; it reads MNGTEGPYFYIPMLNTTGIVRSPYEYPQYYLVNPAA. Residues N2 and N15 are each glycosylated (N-linked (GlcNAc...) asparagine). A helical membrane pass occupies residues 37 to 61; that stretch reads YAALCAYMFLLILLGFPINFLTLYV. The Cytoplasmic segment spans residues 62-73; the sequence is TIEHKKLRTPLN. A helical transmembrane segment spans residues 74–96; sequence YILLNLAVANLFMVFGGFTTTMY. Residues 97–110 are Extracellular-facing; the sequence is TSMHGYFVLGRLGC. The cysteines at positions 110 and 187 are disulfide-linked. Residues 111–133 form a helical membrane-spanning segment; that stretch reads NLEGFFATLGGEIGLWSLVVLAV. Residues 134-136 carry the 'Ionic lock' involved in activated form stabilization motif; sequence ERW. At 134–152 the chain is on the cytoplasmic side; sequence ERWMVVCKPISNFRFTENH. The helical transmembrane segment at 153–173 threads the bilayer; sequence AIMGLGFTWFAASACAVPPLV. Residues 174-202 lie on the Extracellular side of the membrane; that stretch reads GWSRYIPEGMQCSCGVDYYTRAEGFNNES. N-linked (GlcNAc...) asparagine glycosylation occurs at N200. A helical membrane pass occupies residues 203–224; that stretch reads FVVYMFVCHFLIPLIVVFFCYG. The Cytoplasmic portion of the chain corresponds to 225–252; sequence RLLCAVKEAAAAQQESETTQRAEREVTR. Residues 253 to 274 form a helical membrane-spanning segment; that stretch reads MVVIMVIAFLICWCPYAGVAWY. Topologically, residues 275 to 286 are extracellular; the sequence is IFSNQGSEFGPL. The helical transmembrane segment at 287–308 threads the bilayer; sequence FMTIPAFFAKSSSIYNPLIYIF. An N6-(retinylidene)lysine modification is found at K296. Residues 309 to 353 are Cytoplasmic-facing; that stretch reads MNKQFRHCMITTLCCGKNPFEEEEGSTTTSKTEASSASSSSVSPA. Residues C322 and C323 are each lipidated (S-palmitoyl cysteine). Positions 329 to 353 are disordered; sequence EEEEGSTTTSKTEASSASSSSVSPA. The span at 334 to 353 shows a compositional bias: low complexity; that stretch reads STTTSKTEASSASSSSVSPA.

The protein belongs to the G-protein coupled receptor 1 family. Opsin subfamily. Post-translationally, phosphorylated on some or all of the serine and threonine residues present in the C-terminal region. In terms of processing, contains one covalently linked retinal chromophore.

It localises to the membrane. It is found in the cell projection. Its subcellular location is the cilium. The protein localises to the photoreceptor outer segment. In terms of biological role, photoreceptor required for image-forming vision at low light intensity. While most salt water fish species use retinal as chromophore, most freshwater fish use 3-dehydroretinal, or a mixture of retinal and 3-dehydroretinal. Light-induced isomerization of 11-cis to all-trans retinal triggers a conformational change that activates signaling via G-proteins. Subsequent receptor phosphorylation mediates displacement of the bound G-protein alpha subunit by arrestin and terminates signaling. The protein is Rhodopsin (rho) of Solea solea (Common sole).